Reading from the N-terminus, the 818-residue chain is Structure-specific endonuclease subunit SLX4 (818 aa).

Disordered regions lie at residues 1 to 39 (MSFL…PSAS), 53 to 151 (RDPY…SSSN), 279 to 324 (FSEG…HQDS), 413 to 437 (NAQF…KTSK), and 587 to 712 (MLPA…MASE). The segment covering 28–39 (VIDSSPSVPSAS) has biased composition (low complexity). A compositionally biased stretch (basic and acidic residues) spans 90–103 (PSERTKDAHGKDRF). Positions 306 to 316 (TTSTTITSLST) are enriched in low complexity. The span at 426–437 (TRSPCSNPKTSK) shows a compositional bias: polar residues. Residues 604–618 (QMSKRDTIKSRDIRA) show a composition bias toward basic and acidic residues. Composition is skewed to polar residues over residues 621-640 (SRSN…QNTG), 652-672 (SSKS…TQSV), and 696-712 (SLAS…MASE).

It belongs to the SLX4 family. In terms of assembly, forms a heterodimer with SLX1. In terms of processing, phosphorylated in response to DNA damage.

It is found in the nucleus. Its function is as follows. Regulatory subunit of the SLX1-SLX4 structure-specific endonuclease that resolves DNA secondary structures generated during DNA repair and recombination. Has endonuclease activity towards branched DNA substrates, introducing single-strand cuts in duplex DNA close to junctions with ss-DNA. The protein is Structure-specific endonuclease subunit SLX4 of Uncinocarpus reesii (strain UAMH 1704).